The primary structure comprises 170 residues: ATP synthase subunit b (170 aa).

A helical transmembrane segment spans residues 15–37 (GDILFQLLAMLILLALLKKYALG).

It belongs to the ATPase B chain family. As to quaternary structure, F-type ATPases have 2 components, F(1) - the catalytic core - and F(0) - the membrane proton channel. F(1) has five subunits: alpha(3), beta(3), gamma(1), delta(1), epsilon(1). F(0) has three main subunits: a(1), b(2) and c(10-14). The alpha and beta chains form an alternating ring which encloses part of the gamma chain. F(1) is attached to F(0) by a central stalk formed by the gamma and epsilon chains, while a peripheral stalk is formed by the delta and b chains. The F(1)F(0) complex interacts with SpoIIIJ and YqjG; YqgA is found in the same complex.

The protein resides in the cell membrane. In terms of biological role, f(1)F(0) ATP synthase produces ATP from ADP in the presence of a proton or sodium gradient. F-type ATPases consist of two structural domains, F(1) containing the extramembraneous catalytic core and F(0) containing the membrane proton channel, linked together by a central stalk and a peripheral stalk. During catalysis, ATP synthesis in the catalytic domain of F(1) is coupled via a rotary mechanism of the central stalk subunits to proton translocation. Its function is as follows. Component of the F(0) channel, it forms part of the peripheral stalk, linking F(1) to F(0). The chain is ATP synthase subunit b from Bacillus subtilis (strain 168).